Here is an 85-residue protein sequence, read N- to C-terminus: COMM domain-containing protein 6 (85 aa).

N-acetylmethionine is present on M1. The 68-residue stretch at 18 to 85 (QLVDFQWKLG…KEIAAVIETV (68 aa)) folds into the COMM domain.

It belongs to the COMM domain-containing protein 6 family. As to quaternary structure, component of the commander complex consisting of the CCC subcomplex and the retriever subcomplex. Component of the CCC (COMMD/CCDC22/CCDC93) subcomplex consisting of COMMD1, COMMD2, COMMD3, COMMD4, COMMD5, COMMD6, COMMD7, COMMD8, COMMD9, COMMD10, CCDC22 and CCDC93; within the complex forms a heterodimer with COMMD1. May form a homodimer with isoform 1. Interacts with RELA, RELB, NFKB1/p105. Does not interact with NFKBIB. Interacts with CCDC22, CCDC93, SCNN1B, CUL4A. As to expression, ubiquitous. Expressed in brain, heart, skeletal muscle, lung, pancreas, liver, kidney, small intestine and placenta.

It is found in the nucleus. It localises to the cytoplasm. Functionally, scaffold protein in the commander complex that is essential for endosomal recycling of transmembrane cargos; the commander complex is composed of the CCC subcomplex and the retriever subcomplex. May modulate activity of cullin-RING E3 ubiquitin ligase (CRL) complexes. Down-regulates activation of NF-kappa-B. Inhibits TNF-induced NFKB1 activation. The protein is COMM domain-containing protein 6 (COMMD6) of Homo sapiens (Human).